A 168-amino-acid chain; its full sequence is Phosphopantetheine adenylyltransferase (168 aa).

Residue Thr-14 participates in substrate binding. ATP contacts are provided by residues 14-15 and His-22; that span reads TF. Substrate contacts are provided by Lys-46, Leu-78, and Arg-92. Residues 93 to 95, Glu-103, and 128 to 134 contribute to the ATP site; these read GLR and YSFISSS.

Belongs to the bacterial CoaD family. Homohexamer. Mg(2+) serves as cofactor.

The protein localises to the cytoplasm. The enzyme catalyses (R)-4'-phosphopantetheine + ATP + H(+) = 3'-dephospho-CoA + diphosphate. Its pathway is cofactor biosynthesis; coenzyme A biosynthesis; CoA from (R)-pantothenate: step 4/5. Functionally, reversibly transfers an adenylyl group from ATP to 4'-phosphopantetheine, yielding dephospho-CoA (dPCoA) and pyrophosphate. This is Phosphopantetheine adenylyltransferase from Xanthomonas campestris pv. campestris (strain 8004).